The chain runs to 276 residues: MANISIADIKALREQLGTGMVDTKKALEEAGGDLEKATEILRLKGAKGNAKRADRSTSEGLVAAKENANGTATMIELACETDFVAKGEKFVALSDTVLDAIAAAGSTTIEEALAAPAGSQTVAEFIGDEAAILGEKIELRRVAVVNGEHVAIYLHKTSKDLPPQVGVVVGYAGDDTETARSIAQHISFANPAHLTREDVPAEEVESERRIVKEISRSEGKPEAALPKIIEGRLGAFFKQVALLEQEYARDNKLTISQVLKDSGLTVSGFARFKVGA.

An involved in Mg(2+) ion dislocation from EF-Tu region spans residues 81-84 (TDFV).

Belongs to the EF-Ts family.

The protein resides in the cytoplasm. Its function is as follows. Associates with the EF-Tu.GDP complex and induces the exchange of GDP to GTP. It remains bound to the aminoacyl-tRNA.EF-Tu.GTP complex up to the GTP hydrolysis stage on the ribosome. This is Elongation factor Ts from Leifsonia xyli subsp. xyli (strain CTCB07).